Here is a 235-residue protein sequence, read N- to C-terminus: Probable carboxylesterase Os04g0669600 (235 aa).

Residues Ser113, Asp167, and His199 each act as charge relay system in the active site.

Belongs to the AB hydrolase superfamily. AB hydrolase 2 family.

In terms of biological role, possesses carboxylesterase activity in vitro. This is Probable carboxylesterase Os04g0669600 from Oryza sativa subsp. japonica (Rice).